A 465-amino-acid polypeptide reads, in one-letter code: Alpha-2A adrenergic receptor (465 aa).

The Extracellular portion of the chain corresponds to 1–48 (MFRQEQPLAEGSFAPMGSLQPDAGNSSWNGTEAPGGGTRATPYSLQVT). N25 and N29 each carry an N-linked (GlcNAc...) asparagine glycan. A helical membrane pass occupies residues 49–74 (LTLVCLAGLLMLFTVFGNVLVIIAVF). At 75 to 85 (TSRALKAPQNL) the chain is on the cytoplasmic side. A helical transmembrane segment spans residues 86-111 (FLVSLASADILVATLVIPFSLANEVM). At 112–121 (GYWYFGKVWC) the chain is on the extracellular side. A disulfide bridge connects residues C121 and C203. The chain crosses the membrane as a helical span at residues 122 to 144 (EIYLALDVLFCTSSIVHLCAISL). The Cytoplasmic segment spans residues 145 to 164 (DRYWSITQAIEYNLKRTPRR). Residues 165 to 188 (IKAIIVTVWVISAVISFPPLISIE) form a helical membrane-spanning segment. The Extracellular portion of the chain corresponds to 189–207 (KKGAGGGQQPAEPSCKIND). Residues 208-232 (QKWYVISSSIGSFFAPCLIMILVYV) traverse the membrane as a helical segment. The Cytoplasmic portion of the chain corresponds to 233–389 (RIYQIAKRRT…RQNREKRFTF (157 aa)). The interval 242–377 (TRVPPSRRGP…RAGGAKASRW (136 aa)) is disordered. Positions 313–330 (SSEHAERPQGPGKPERGP) are enriched in basic and acidic residues. The residue at position 346 (S346) is a Phosphoserine. Gly residues predominate over residues 353–364 (GAAGPGASGSGQ). Residue R368 is modified to Omega-N-methylarginine. A helical membrane pass occupies residues 390–414 (VLAVVIGVFVVCWFPFFFTYTLIAV). The Extracellular portion of the chain corresponds to 415-424 (GCPVPYQLFN). A helical membrane pass occupies residues 425-445 (FFFWFGYCNSSLNPVIYTIFN). Residues 446–465 (HDFRRAFKKILCRGDRKRIV) are Cytoplasmic-facing. C457 carries the S-palmitoyl cysteine lipid modification.

The protein belongs to the G-protein coupled receptor 1 family. Adrenergic receptor subfamily. ADRA2A sub-subfamily. In terms of tissue distribution, expressed in brain.

Its subcellular location is the cell membrane. Functionally, alpha-2 adrenergic receptors mediate the catecholamine-induced inhibition of adenylate cyclase through the action of G proteins. The polypeptide is Alpha-2A adrenergic receptor (Rattus norvegicus (Rat)).